Consider the following 389-residue polypeptide: Geodin cluster transcriptional coactivator gedD (389 aa).

An HTH iclR-type domain is found at 13-83; that stretch reads LAWHVQLLAC…QPGQIMHTPL (71 aa). The H-T-H motif DNA-binding region spans 43–62; it reads VRDLAQLCGVSETTLSRVVR.

The protein localises to the nucleus. Functionally, transcriptional coactivator; part of the gene cluster that mediates the biosynthesis of geodin, an intermediate in the biosynthesis of other natural products. With gedR, coregulates the production of geodin. In Aspergillus terreus (strain NIH 2624 / FGSC A1156), this protein is Geodin cluster transcriptional coactivator gedD (gedD).